A 728-amino-acid chain; its full sequence is Catalase-peroxidase (728 aa).

Positions 91–218 (WHSAGTYRTA…LAAVQMGLIY (128 aa)) form a cross-link, tryptophyl-tyrosyl-methioninium (Trp-Tyr) (with M-244). Histidine 92 serves as the catalytic Proton acceptor. A cross-link (tryptophyl-tyrosyl-methioninium (Tyr-Met) (with W-91)) is located at residues 218–244 (YVNPEGPDGNPDPVAAARDIRDTFARM). Position 259 (histidine 259) interacts with heme b.

This sequence belongs to the peroxidase family. Peroxidase/catalase subfamily. As to quaternary structure, homodimer or homotetramer. Heme b serves as cofactor. Formation of the three residue Trp-Tyr-Met cross-link is important for the catalase, but not the peroxidase activity of the enzyme.

The catalysed reaction is H2O2 + AH2 = A + 2 H2O. It catalyses the reaction 2 H2O2 = O2 + 2 H2O. Bifunctional enzyme with both catalase and broad-spectrum peroxidase activity. This is Catalase-peroxidase from Burkholderia pseudomallei (strain 1710b).